Here is a 488-residue protein sequence, read N- to C-terminus: UDP-N-acetylmuramate--L-alanine ligase (488 aa).

126-132 lines the ATP pocket; that stretch reads GTHGKTT.

It belongs to the MurCDEF family.

It is found in the cytoplasm. The catalysed reaction is UDP-N-acetyl-alpha-D-muramate + L-alanine + ATP = UDP-N-acetyl-alpha-D-muramoyl-L-alanine + ADP + phosphate + H(+). The protein operates within cell wall biogenesis; peptidoglycan biosynthesis. Functionally, cell wall formation. The polypeptide is UDP-N-acetylmuramate--L-alanine ligase (Cronobacter sakazakii (strain ATCC BAA-894) (Enterobacter sakazakii)).